The chain runs to 858 residues: Ubiquitin carboxyl-terminal hydrolase 5 (858 aa).

N-acetylalanine is present on A2. The segment at 74–96 (RRTRRPKEEDPTTGTGDPPRKKP) is disordered. K113 participates in a covalent cross-link: Glycyl lysine isopeptide (Lys-Gly) (interchain with G-Cter in SUMO). 2 positions are modified to phosphoserine: S149 and S156. The UBP-type; degenerate zinc-finger motif lies at 175–283 (QVSKHAFSLK…EHLSHFGIDM (109 aa)). Cysteines 195 and 816 form a disulfide. C199 and C202 together coordinate Zn(2+). Residue W209 participates in substrate binding. A Zn(2+)-binding site is contributed by C219. 221–224 (RRYF) is a substrate binding site. A Zn(2+)-binding site is contributed by H232. The substrate site is built by Y259, Y261, and D264. The residue at position 292 (T292) is a Phosphothreonine. In terms of domain architecture, USP spans 326 to 856 (TGIRNLGNSC…LGYIYFYQRV (531 aa)). The Nucleophile role is filled by C335. Phosphothreonine is present on T623. 2 consecutive UBA domains span residues 654–695 (MLDE…VMSH) and 722–762 (PPPE…IFSH). Phosphoserine occurs at positions 779, 783, and 785. H818 acts as the Proton acceptor in catalysis.

It belongs to the peptidase C19 family. In terms of assembly, homodimer. Interacts with TRIML1. In terms of processing, ubiquitinated by SMURF1; leading to proteasomal degradation. Post-translationally, SUMOylated at Lys-113; SUMOylation affects the interaction with Cav3.2 channels.

The protein localises to the cytoplasm. It localises to the stress granule. Its subcellular location is the nucleus. It catalyses the reaction Thiol-dependent hydrolysis of ester, thioester, amide, peptide and isopeptide bonds formed by the C-terminal Gly of ubiquitin (a 76-residue protein attached to proteins as an intracellular targeting signal).. Functionally, deubiquitinating enzyme that participates in a wide range of cellular processes by specifically cleaving isopeptide bonds between ubiquitin and substrate proteins or ubiquitin itself. Affects thereby important cellular signaling pathways such as NF-kappa-B, Wnt/beta-catenin, and cytokine production by regulating ubiquitin-dependent protein degradation. Participates in the activation of the Wnt signaling pathway by promoting FOXM1 deubiquitination and stabilization that induces the recruitment of beta-catenin to Wnt target gene promoter. Regulates the assembly and disassembly of heat-induced stress granules by mediating the hydrolysis of unanchored ubiquitin chains. Promotes lipopolysaccharide-induced apoptosis and inflammatory response by stabilizing the TXNIP protein. Affects T-cell biology by stabilizing the inhibitory receptor on T-cells PDC1. Acts as a negative regulator of autophagy by regulating ULK1 at both protein and mRNA levels. Acts also as a negative regulator of type I interferon production by simultaneously removing both 'Lys-48'-linked unanchored and 'Lys-63'-linked anchored polyubiquitin chains on the transcription factor IRF3. Modulates the stability of DNA mismatch repair protein MLH1 and counteracts the effect of the ubiquitin ligase UBR4. Upon activation by insulin, it gets phosphorylated through mTORC1-mediated phosphorylation to enhance YTHDF1 stability by removing 'Lys-11'-linked polyubiquitination. May also deubiquitinate other substrates such as the calcium channel CACNA1H. The protein is Ubiquitin carboxyl-terminal hydrolase 5 (UBP5) of Pongo abelii (Sumatran orangutan).